The following is a 293-amino-acid chain: 4-diphosphocytidyl-2-C-methyl-D-erythritol kinase (293 aa).

Residue Lys10 is part of the active site. 94–104 (PVSAGLAGGSS) contributes to the ATP binding site. Residue Asp136 is part of the active site.

Belongs to the GHMP kinase family. IspE subfamily.

It carries out the reaction 4-CDP-2-C-methyl-D-erythritol + ATP = 4-CDP-2-C-methyl-D-erythritol 2-phosphate + ADP + H(+). Its pathway is isoprenoid biosynthesis; isopentenyl diphosphate biosynthesis via DXP pathway; isopentenyl diphosphate from 1-deoxy-D-xylulose 5-phosphate: step 3/6. Its function is as follows. Catalyzes the phosphorylation of the position 2 hydroxy group of 4-diphosphocytidyl-2C-methyl-D-erythritol. This is 4-diphosphocytidyl-2-C-methyl-D-erythritol kinase from Listeria monocytogenes serovar 1/2a (strain ATCC BAA-679 / EGD-e).